We begin with the raw amino-acid sequence, 183 residues long: Ribosome maturation factor RimM (183 aa).

Residues 103–183 (EEGDYYWKDL…SIEVDWDPGF (81 aa)) form the PRC barrel domain.

The protein belongs to the RimM family. As to quaternary structure, binds ribosomal protein uS19.

The protein localises to the cytoplasm. An accessory protein needed during the final step in the assembly of 30S ribosomal subunit, possibly for assembly of the head region. Essential for efficient processing of 16S rRNA. May be needed both before and after RbfA during the maturation of 16S rRNA. It has affinity for free ribosomal 30S subunits but not for 70S ribosomes. The protein is Ribosome maturation factor RimM of Escherichia coli O157:H7 (strain EC4115 / EHEC).